The sequence spans 60 residues: Short neurotoxin C (60 aa).

4 disulfides stabilise this stretch: Cys3–Cys22, Cys17–Cys39, Cys41–Cys52, and Cys53–Cys58.

Belongs to the three-finger toxin family. Short-chain subfamily. Type I alpha-neurotoxin sub-subfamily. In terms of tissue distribution, expressed by the venom gland.

It is found in the secreted. Functionally, binds to muscle nicotinic acetylcholine receptor (nAChR) and inhibit acetylcholine from binding to the receptor, thereby impairing neuromuscular transmission. The protein is Short neurotoxin C of Aipysurus laevis (Olive sea snake).